Consider the following 213-residue polypeptide: 5-oxoprolinase subunit B (213 aa).

It belongs to the PxpB family. As to quaternary structure, forms a complex composed of PxpA, PxpB and PxpC.

It carries out the reaction 5-oxo-L-proline + ATP + 2 H2O = L-glutamate + ADP + phosphate + H(+). Catalyzes the cleavage of 5-oxoproline to form L-glutamate coupled to the hydrolysis of ATP to ADP and inorganic phosphate. This chain is 5-oxoprolinase subunit B, found in Haemophilus influenzae (strain ATCC 51907 / DSM 11121 / KW20 / Rd).